The chain runs to 494 residues: Beta-glucosidase 29 (494 aa).

The signal sequence occupies residues 1-28 (MAWLGIGMGRQIVPVLVFVAVLCSGVDA). Gln49 serves as a coordination point for a beta-D-glucoside. Residue Asn103 is glycosylated (N-linked (GlcNAc...) asparagine). A beta-D-glucoside contacts are provided by residues His138 and 183 to 184 (NE). Glu184 acts as the Proton donor in catalysis. Cys203 and Cys211 form a disulfide bridge. N-linked (GlcNAc...) asparagine glycosylation occurs at Asn263. An a beta-D-glucoside-binding site is contributed by Tyr327. A glycan (N-linked (GlcNAc...) asparagine) is linked at Asn352. Glu398 provides a ligand contact to a beta-D-glucoside. The active-site Nucleophile is Glu398. A glycan (N-linked (GlcNAc...) asparagine) is linked at Asn406. A beta-D-glucoside-binding positions include Trp447, 454-455 (EW), and Phe463.

This sequence belongs to the glycosyl hydrolase 1 family.

It carries out the reaction Hydrolysis of terminal, non-reducing beta-D-glucosyl residues with release of beta-D-glucose.. The chain is Beta-glucosidase 29 (BGLU29) from Oryza sativa subsp. japonica (Rice).